We begin with the raw amino-acid sequence, 458 residues long: Vacuolar basic amino acid transporter 3 (458 aa).

The Cytoplasmic portion of the chain corresponds to 1–9 (MNMLIVGRV). Residues 10 to 30 (VASVGGSGLQTLCFVIGCTMV) form a helical membrane-spanning segment. At 31 to 36 (GERSRP) the chain is on the vacuolar side. Residues 37-57 (LVISILSCAFAVAAIVGPIIG) form a helical membrane-spanning segment. Over 58 to 67 (GAFTTHVTWR) the chain is Cytoplasmic. Residues 68–88 (WCFYINLPIGGLAIIMFLLTY) form a helical membrane-spanning segment. The Vacuolar portion of the chain corresponds to 89–132 (KAENKGILQQIKDAIGTISSFTFSKFRHQVNFKRLMNGIIFKFD). The helical transmembrane segment at 133-153 (FFGFALCSAGLVLFLLGLTFG) threads the bilayer. At 154–163 (GNKYSWNSGQ) the chain is on the cytoplasmic side. Residues 164 to 184 (VIAYLVLGVLLFIFSLVYDFF) form a helical membrane-spanning segment. Topologically, residues 185 to 205 (LFDKFNPEPDNISYRPLLLRR) are vacuolar. Asparagine 195 is a glycosylation site (N-linked (GlcNAc...) asparagine). Residues 206 to 226 (LVAKPAIIIINMVTFLLCTGY) traverse the membrane as a helical segment. At 227–248 (NGQMIYSVQFFQLIFASSAWKA) the chain is on the cytoplasmic side. Residues 249 to 269 (GLHLIPIVITNVIAAIASGVI) traverse the membrane as a helical segment. At 270–277 (TKKLGLVK) the chain is on the vacuolar side. The helical transmembrane segment at 278–298 (PLLIFGGVLGVIGAGLMTLMT) threads the bilayer. At 299–306 (NTSTKSTQ) the chain is on the cytoplasmic side. The helical transmembrane segment at 307 to 327 (IGVLLLPGFSLGFALQASLMS) threads the bilayer. The Vacuolar segment spans residues 328 to 415 (AQLQITKDRP…STIGNILSDS (88 aa)). A helical transmembrane segment spans residues 416 to 436 (IKNVFWMDLGFYALGFLFCSF). Topologically, residues 437 to 458 (SSNKKLIIPKKDETPEDNLEDK) are cytoplasmic.

The protein belongs to the major facilitator superfamily.

The protein resides in the vacuole membrane. Its function is as follows. Transporter required for vacuolar uptake of histidine and lysine. The polypeptide is Vacuolar basic amino acid transporter 3 (VBA3) (Saccharomyces cerevisiae (strain ATCC 204508 / S288c) (Baker's yeast)).